We begin with the raw amino-acid sequence, 436 residues long: ATP-dependent protease ATPase subunit HslU (436 aa).

ATP contacts are provided by residues isoleucine 18, 60 to 65 (GVGKTE), aspartate 249, glutamate 314, and arginine 386.

Belongs to the ClpX chaperone family. HslU subfamily. In terms of assembly, a double ring-shaped homohexamer of HslV is capped on each side by a ring-shaped HslU homohexamer. The assembly of the HslU/HslV complex is dependent on binding of ATP.

The protein resides in the cytoplasm. In terms of biological role, ATPase subunit of a proteasome-like degradation complex; this subunit has chaperone activity. The binding of ATP and its subsequent hydrolysis by HslU are essential for unfolding of protein substrates subsequently hydrolyzed by HslV. HslU recognizes the N-terminal part of its protein substrates and unfolds these before they are guided to HslV for hydrolysis. The polypeptide is ATP-dependent protease ATPase subunit HslU (Ruegeria sp. (strain TM1040) (Silicibacter sp.)).